The sequence spans 392 residues: Phosphoglycerate kinase (392 aa).

Residues 21–23 (DFN), Arg36, 59–62 (HLGR), Arg113, and Arg146 contribute to the substrate site. Residues Lys197, Glu319, and 345 to 348 (GGDT) each bind ATP.

This sequence belongs to the phosphoglycerate kinase family. As to quaternary structure, monomer.

The protein resides in the cytoplasm. It carries out the reaction (2R)-3-phosphoglycerate + ATP = (2R)-3-phospho-glyceroyl phosphate + ADP. The protein operates within carbohydrate degradation; glycolysis; pyruvate from D-glyceraldehyde 3-phosphate: step 2/5. This is Phosphoglycerate kinase from Francisella tularensis subsp. holarctica (strain FTNF002-00 / FTA).